The chain runs to 294 residues: Probable 2-(5''-triphosphoribosyl)-3'-dephosphocoenzyme-A synthase (294 aa).

This sequence belongs to the CitG/MdcB family.

It catalyses the reaction 3'-dephospho-CoA + ATP = 2'-(5''-triphospho-alpha-D-ribosyl)-3'-dephospho-CoA + adenine. In Streptococcus pyogenes serotype M28 (strain MGAS6180), this protein is Probable 2-(5''-triphosphoribosyl)-3'-dephosphocoenzyme-A synthase.